The primary structure comprises 582 residues: PX domain-containing protein kinase-like protein (582 aa).

Residues 14–126 (LDDTVPLTAA…KFLDPNNYSA (113 aa)) form the PX domain. In terms of domain architecture, Protein kinase spans 88–481 (FIAERQRGLQ…VENSEEQPVK (394 aa)). The interval 433-550 (EQKQIHQHRR…APFLPQPVNG (118 aa)) is disordered. Composition is skewed to basic residues over residues 437-448 (IHQHRRLTRAQS) and 457-469 (KRRK…KSKR). Residues 483–514 (SNSNNSAGSGASSPLTSPSSPTPPSTAGLSSA) are compositionally biased toward low complexity. A compositionally biased stretch (pro residues) spans 515-531 (LPPPPPPPPPPPPPAGP). Residues 548-567 (VNGVNRGALLSSIQNFQKGT) enclose the WH2 domain.

It belongs to the protein kinase superfamily. In terms of tissue distribution, isoform 1 is present in all tissues examined. Isoform 2 is found in all tissues except skeletal muscle and very low levels in spleen. Both isoforms are widely expressed throughout the nervous system however levels of isoform 2 are higher in purified hippocampal and cortical neurons whereas glial cells express more isoform 1 than isoform 2.

The protein localises to the cytoplasm. It is found in the cell membrane. Binds to and modulates brain Na,K-ATPase subunits ATP1B1 and ATP1B3 and may thereby participate in the regulation of electrical excitability and synaptic transmission. May not display kinase activity. In Mus musculus (Mouse), this protein is PX domain-containing protein kinase-like protein.